We begin with the raw amino-acid sequence, 481 residues long: 3-isopropylmalate dehydratase large subunit (481 aa).

The [4Fe-4S] cluster site is built by Cys357, Cys417, and Cys420.

Belongs to the aconitase/IPM isomerase family. LeuC type 1 subfamily. As to quaternary structure, heterodimer of LeuC and LeuD. Requires [4Fe-4S] cluster as cofactor.

It catalyses the reaction (2R,3S)-3-isopropylmalate = (2S)-2-isopropylmalate. The protein operates within amino-acid biosynthesis; L-leucine biosynthesis; L-leucine from 3-methyl-2-oxobutanoate: step 2/4. Catalyzes the isomerization between 2-isopropylmalate and 3-isopropylmalate, via the formation of 2-isopropylmaleate. In Maricaulis maris (strain MCS10) (Caulobacter maris), this protein is 3-isopropylmalate dehydratase large subunit.